A 692-amino-acid polypeptide reads, in one-letter code: A-type ATP synthase subunit I (692 aa).

Transmembrane regions (helical) follow at residues 389-409 (GIMLTDAVYGLLLTIIGLFIW), 422-442 (LGYILTLAGISTVIMGIITGG), 494-514 (ILVFSIFVGLIHLLIGLFVGF), 531-551 (GVWILLILSIFVGIGLMFAGA), 553-573 (TMIAGGIIGIFVVLAILASMY), 602-622 (ARLLALCLATGGLAMAVNIMA), and 624-644 (LVGESIPVIGIIVAIIILLVG).

This sequence belongs to the V-ATPase 116 kDa subunit family. The A-type ATPase is composed of subunits A(3), B(3), C, D, E(1 or 2), F, H(2), I and K(x).

The protein resides in the cell membrane. In terms of biological role, component of the A-type ATP synthase that produces ATP from ADP in the presence of a proton gradient across the membrane. The protein is A-type ATP synthase subunit I of Methanocaldococcus jannaschii (strain ATCC 43067 / DSM 2661 / JAL-1 / JCM 10045 / NBRC 100440) (Methanococcus jannaschii).